Reading from the N-terminus, the 817-residue chain is Putative ATP-dependent RNA helicase R350 (817 aa).

A disordered region spans residues Met-1–Gly-29. Residues Glu-17 to Gly-29 show a composition bias toward polar residues. One can recognise a Helicase ATP-binding domain in the interval Leu-93 to Gly-271. Residue His-106–Thr-113 coordinates ATP. Positions Asp-206 to His-209 match the DEAH box motif. Residues Leu-495–Ala-661 enclose the Helicase C-terminal domain.

It belongs to the DEAD box helicase family. DEAH subfamily.

The protein localises to the virion. It carries out the reaction ATP + H2O = ADP + phosphate + H(+). The sequence is that of Putative ATP-dependent RNA helicase R350 from Acanthamoeba polyphaga mimivirus (APMV).